Here is a 1452-residue protein sequence, read N- to C-terminus: ABC multidrug transporter A (1452 aa).

The segment at 1-20 (MNESHEAGKNSSTNVEEREE) is disordered. Asparagine 2, asparagine 10, asparagine 228, asparagine 287, and asparagine 311 each carry an N-linked (GlcNAc...) asparagine glycan. Residues 110 to 363 (LKTLSLARIA…FLQMGFVCPD (254 aa)) form the ABC transporter 1 domain. 6 helical membrane passes run 474–494 (VTIS…SIFY), 508–528 (ALLF…MLTL), 554–574 (MIMD…VLYF), 583–603 (GAFF…SMFF), 616–636 (VLPF…FAIP), and 725–745 (IGVI…ATDF). The region spanning 802-1044 (FQWKDVCFDI…ILIDYFVRNG (243 aa)) is the ABC transporter 2 domain. Residue 838-845 (GVSGAGKT) coordinates ATP. Helical transmembrane passes span 1153–1173 (ALCV…PNTI), 1183–1203 (IFML…HFVA), 1223–1243 (FLIA…VLMF), 1271–1291 (LMIW…IAAF), and 1297–1317 (AGNL…VLAT). N-linked (GlcNAc...) asparagine glycans are attached at residues asparagine 1350, asparagine 1365, and asparagine 1391. The chain crosses the membrane as a helical span at residues 1418-1438 (FGLMWVFIVFNIFAACSLYWW).

Belongs to the ABC transporter superfamily. ABCG family. PDR (TC 3.A.1.205) subfamily.

It is found in the membrane. In terms of biological role, ABC transporter that seems not to be involved in the efflux of toxic substances, at least not the classical compounds such as itraconazole, amphotericin B, voriconazole, posaconazole, ravuconazole, or echinocandins. In Aspergillus fumigatus (Neosartorya fumigata), this protein is ABC multidrug transporter A.